Consider the following 241-residue polypeptide: Transforming protein p29 (241 aa).

Positions 1-41 (MPAARAAPAADEPMRDPVAPVRAPALPRPAPGAVAPASGGA) are disordered. Residues cysteine 233 and cysteine 236 are each lipidated (S-palmitoyl cysteine; by host). Cysteine methyl ester; by host is present on cysteine 238. Cysteine 238 carries S-farnesyl cysteine; by host lipidation. The propeptide at 239-241 (VLS) is removed in mature form.

It belongs to the small GTPase superfamily. Ras family.

It is found in the host cell membrane. It catalyses the reaction GTP + H2O = GDP + phosphate + H(+). Alternates between an inactive form bound to GDP and an active form bound to GTP. Activated by a guanine nucleotide-exchange factor (GEF) and inactivated by a GTPase-activating protein (GAP). This Mus musculus (Mouse) protein is Transforming protein p29 (H-RAS).